The primary structure comprises 1252 residues: DNA-directed RNA polymerase subunit beta (1252 aa).

This sequence belongs to the RNA polymerase beta chain family. In terms of assembly, the RNAP catalytic core consists of 2 alpha, 1 beta, 1 beta' and 1 omega subunit. When a sigma factor is associated with the core the holoenzyme is formed, which can initiate transcription.

The catalysed reaction is RNA(n) + a ribonucleoside 5'-triphosphate = RNA(n+1) + diphosphate. In terms of biological role, DNA-dependent RNA polymerase catalyzes the transcription of DNA into RNA using the four ribonucleoside triphosphates as substrates. In Chlamydia abortus (strain DSM 27085 / S26/3) (Chlamydophila abortus), this protein is DNA-directed RNA polymerase subunit beta.